A 421-amino-acid chain; its full sequence is F-box only protein 9 (421 aa).

The segment at 1-63 (MAESNQNTDG…AELRRRQETA (63 aa)) is disordered. Residues 11–20 (AVEEGEDENT) are compositionally biased toward acidic residues. Over residues 40-52 (LQPSSGGQRSFSR) the composition is skewed to polar residues. Residues 54-63 (AELRRRQETA) show a composition bias toward basic and acidic residues. A TPR repeat occupies 68 to 101 (ARELFLKAVEEEQNGAVYEAIKYYKSAMQLVPDI). Residues 158 to 209 (QVHISALPFEVLMYIFRWVVSCDLDLRALEQLSLVCRGFYICARDPEIWRSA) enclose the F-box domain.

Part of the SCF (SKP1-CUL1-F-box) E3 ubiquitin-protein ligase complex SCF(fbxo9).

It is found in the cytoplasm. It functions in the pathway protein modification; protein ubiquitination. Its function is as follows. Substrate recognition component of a SCF (SKP1-CUL1-F-box protein) E3 ubiquitin-protein ligase complex which mediates the ubiquitination and subsequent proteasomal degradation of target proteins and acts as a regulator of mTOR signaling. In Danio rerio (Zebrafish), this protein is F-box only protein 9 (fbxo9).